The chain runs to 413 residues: Peptide chain release factor 1, mitochondrial (413 aa).

Q287 carries the post-translational modification N5-methylglutamine. A disordered region spans residues 335-363 (RLEKEEKERKARKSQVSSTNRSDKIRTYN).

The protein belongs to the prokaryotic/mitochondrial release factor family. Post-translationally, methylation of glutamine in the GGQ triplet is conserved from bacteria to mammals. N5-methylated on Gln-287 by MTQ1.

It localises to the mitochondrion. Its function is as follows. Mitochondrial peptide chain release factor that directs the termination of translation in response to the peptide chain termination codons UAA and UAG. The sequence is that of Peptide chain release factor 1, mitochondrial (MRF1) from Saccharomyces cerevisiae (strain ATCC 204508 / S288c) (Baker's yeast).